Consider the following 92-residue polypeptide: Cell wall protein CWP2 (92 aa).

Residues 1-20 form the signal peptide; it reads MQFSTVASVAFVALANFVAA. The PIR1/2/3 repeat unit spans residues 24–37; sequence AAISQITDGQIQAT. Residues 41–60 are disordered; that stretch reads TTEATTTAAPSSTVETVSPS. Residue Asn-71 is the site of GPI-anchor amidated asparagine attachment. Residues 72–92 constitute a propeptide, removed in mature form; it reads GAAKAAVGMGAGALAAAAMLL.

This sequence belongs to the SRP1/TIP1 family. Extensively O-glycosylated. Post-translationally, the GPI-anchor is attached to the protein in the endoplasmic reticulum and serves to target the protein to the cell surface. There, the glucosamine-inositol phospholipid moiety is cleaved off and the GPI-modified mannoprotein is covalently attached via its lipidless GPI glycan remnant to the 1,6-beta-glucan of the outer cell wall layer. In terms of processing, covalently linked to beta-1,3-glucan of the inner cell wall layer via an alkali-sensitive ester linkage between the gamma-carboxyl group of glutamic acids, arising from a specific glutamine within the PIR1/2/3 repeat, and hydroxyl groups of glucoses of beta-1,3-glucan chains.

It localises to the secreted. Its subcellular location is the cell wall. The protein resides in the membrane. Functionally, component of the cell wall. The polypeptide is Cell wall protein CWP2 (CWP2) (Saccharomyces cerevisiae (strain ATCC 204508 / S288c) (Baker's yeast)).